A 414-amino-acid chain; its full sequence is MTIKTLALQCRDAAQVVSQLSSQAKCALLQAMAAALEADAGTILAANARDLEAARAKGTASAMLDRLALDDKRLAGIAAALREVALLPDPVGRITREDVRPNGIRVQKVRVPLGVIAMIYEARPNVTADAAALCIKAGNGVILRGGSEAIHSNIAIARALQRALREANVPEAALTLVEDLRRETMLELLQLNDIVDLAIPRGGEGLIRFVAEHARVPVIKHYKGVCHLFVDASAEMELALRLLIDGKATRPSACNSLETLLVHADIAERFLPLAAQALRERKVELRGDAATRAVLPEIAPASDDDYAAEFLDLILAMRVVADLDTALAHIRQYGSDHTEVIATQDPDNAERFVQSLRSAVVMVNASSRFSDGGELGLGAEIGISTTRLHSYGPMGLEALTVERFVVRGEGQVRH.

This sequence belongs to the gamma-glutamyl phosphate reductase family.

It localises to the cytoplasm. It carries out the reaction L-glutamate 5-semialdehyde + phosphate + NADP(+) = L-glutamyl 5-phosphate + NADPH + H(+). The protein operates within amino-acid biosynthesis; L-proline biosynthesis; L-glutamate 5-semialdehyde from L-glutamate: step 2/2. In terms of biological role, catalyzes the NADPH-dependent reduction of L-glutamate 5-phosphate into L-glutamate 5-semialdehyde and phosphate. The product spontaneously undergoes cyclization to form 1-pyrroline-5-carboxylate. The protein is Gamma-glutamyl phosphate reductase of Xanthomonas oryzae pv. oryzae (strain MAFF 311018).